A 239-amino-acid chain; its full sequence is Purine nucleoside phosphorylase DeoD-type (239 aa).

His-5 lines the a purine D-ribonucleoside pocket. Phosphate-binding positions include Gly-21, Arg-25, Arg-44, and 88–91; that span reads RVGS. Residues 180–182 and 204–205 each bind a purine D-ribonucleoside; these read EME and SD. The active-site Proton donor is Asp-205.

Belongs to the PNP/UDP phosphorylase family. Homohexamer; trimer of homodimers.

It carries out the reaction a purine D-ribonucleoside + phosphate = a purine nucleobase + alpha-D-ribose 1-phosphate. It catalyses the reaction a purine 2'-deoxy-D-ribonucleoside + phosphate = a purine nucleobase + 2-deoxy-alpha-D-ribose 1-phosphate. Functionally, catalyzes the reversible phosphorolytic breakdown of the N-glycosidic bond in the beta-(deoxy)ribonucleoside molecules, with the formation of the corresponding free purine bases and pentose-1-phosphate. This chain is Purine nucleoside phosphorylase DeoD-type, found in Erwinia tasmaniensis (strain DSM 17950 / CFBP 7177 / CIP 109463 / NCPPB 4357 / Et1/99).